The sequence spans 134 residues: MRHGISCRKFSRPTAHRLSMLANLAVSLIRHERIVTTVAKAKDLRPFVERLVTVGRRLAKKDPVRGRRLLLSKMGGDLDAVNKLLDVLAKRYARRPGGYTRILKNGFRAGDCAPIAIMEFVDRKEGEPKKVAEG.

The protein belongs to the bacterial ribosomal protein bL17 family. As to quaternary structure, part of the 50S ribosomal subunit. Contacts protein L32.

The protein is Large ribosomal subunit protein bL17 of Anaplasma marginale (strain Florida).